The primary structure comprises 213 residues: Cysteine dioxygenase (213 aa).

Positions 100, 102, and 160 each coordinate Fe cation. Residues 107–177 (CVMKVLKGSL…TNFAISLHLY (71 aa)) constitute a cross-link (3'-(S-cysteinyl)-tyrosine (Cys-Tyr)).

It belongs to the cysteine dioxygenase family. Fe cation is required as a cofactor. The thioether cross-link between Cys-107 and Tyr-177 plays a structural role through stabilizing the Fe(2+) ion, and prevents the production of highly damaging free hydroxyl radicals by holding the oxygen radical via hydroxyl hydrogen.

The catalysed reaction is L-cysteine + O2 = 3-sulfino-L-alanine + H(+). This chain is Cysteine dioxygenase (CDO1), found in Ajellomyces capsulatus (strain G186AR / H82 / ATCC MYA-2454 / RMSCC 2432) (Darling's disease fungus).